Here is a 362-residue protein sequence, read N- to C-terminus: Methylthioribose-1-phosphate isomerase (362 aa).

Residue Asp252 is the Proton donor of the active site.

This sequence belongs to the eIF-2B alpha/beta/delta subunits family. MtnA subfamily.

It localises to the cytoplasm. The protein localises to the nucleus. The catalysed reaction is 5-(methylsulfanyl)-alpha-D-ribose 1-phosphate = 5-(methylsulfanyl)-D-ribulose 1-phosphate. It functions in the pathway amino-acid biosynthesis; L-methionine biosynthesis via salvage pathway; L-methionine from S-methyl-5-thio-alpha-D-ribose 1-phosphate: step 1/6. In terms of biological role, catalyzes the interconversion of methylthioribose-1-phosphate (MTR-1-P) into methylthioribulose-1-phosphate (MTRu-1-P). This Drosophila virilis (Fruit fly) protein is Methylthioribose-1-phosphate isomerase.